The primary structure comprises 2382 residues: MSGGAAEKQSSTPGSLFLSPPAPAPKNGSSSDSSVGEKLGAAAADAVTGRTEEYRRRRHTMDKDSRGAAATTTTTEHRFFRRSVICDSNATALELPGLPLSLPQPSIPAAVPQSAPPEPHREETVTATATSQVAQQPPAAAAPGEQAVAGPAPSTVPSSTSKDRPVSQPSLVGSKEEPPPARSGSGGGSAKEPQEERSQQQDDIEELETKAVGMSNDGRFLKFDIEIGRGSFKTVYKGLDTETTVEVAWCELQDRKLTKSERQRFKEEAEMLKGLQHPNIVRFYDSWESTVKGKKCIVLVTELMTSGTLKTYLKRFKVMKIKVLRSWCRQILKGLQFLHTRTPPIIHRDLKCDNIFITGPTGSVKIGDLGLATLKRASFAKSVIGTPEFMAPEMYEEKYDESVDVYAFGMCMLEMATSEYPYSECQNAAQIYRRVTSGVKPASFDKVAIPEVKEIIEGCIRQNKDERYSIKDLLNHAFFQEETGVRVELAEEDDGEKIAIKLWLRIEDIKKLKGKYKDNEAIEFSFDLERDVPEDVAQEMVESGYVCEGDHKTMAKAIKDRVSLIKRKREQRQLVREEQEKKKQEESSLKQQVEQSSASQTGIKQLPSASTGIPTASTTSASVSTQVEPEEPEADQHQQLQYQQPSISVLSDGTVDSGQGSSVFTESRVSSQQTVSYGSQHEQAHSTGTVPGHIPSTVQAQSQPHGVYPPSSVAQGQSQGQPSSSSLTGVSSSQPIQHPQQQQGIQQTAPPQQTVQYSLSQTSTSSEATTAQPVSQPQAPQVLPQVSAGKQLPVSQPVPTIQGEPQIPVATQPSVVPVHSGAHFLPVGQPLPTPLLPQYPVSQIPISTPHVSTAQTGFSSLPITMAAGITQPLLTLASSATTAAIPGVSTVVPSQLPTLLQPVTQLPSQVHPQLLQPAVQSMGIPANLGQAAEVPLSSGDVLYQGFPPRLPPQYPGDSNIAPSSNVASVCIHSTVLSPPMPTEVLATPGYFPTVVQPYVESNLLVPMGGVGGQVQVSQPGGSLAQAPTTSSQQAVLESTQGVSQVAPAEPVAVAQTQATQPTTLASSVDSAHSDVASGMSDGNENVPSSSGRHEGRTTKRHYRKSVRSRSRHEKTSRPKLRILNVSNKGDRVVECQLETHNRKMVTFKFDLDGDNPEEIATIMVNNDFILAIERESFVDQVREIIEKADEMLSEDVSVEPEGDQGLESLQGKDDYGFSGSQKLEGEFKQPIPASSMPQQIGIPTSSLTQVVHSAGRRFIVSPVPESRLRESKVFPSEITDTVAASTAQSPGMNLSHSASSLSLQQAFSELRRAQMTEGPNTAPPNFSHTGPTFPVVPPFLSSIAGVPTTAAATAPVPATSSPPNDISTSVIQSEVTVPTEEGIAGVATSTGVVTSGGLPIPPVSESPVLSSVVSSITIPAVVSISTTSPSLQVPTSTSEIVVSSTALYPSVTVSATSASAGGSTATPGPKPPAVVSQQAAGSTTVGATLTSVSTTTSFPSTASQLCIQLSSSTSTPTLAETVVVSAHSLDKTSHSSTTGLAFSLSAPSSSSSPGAGVSSYISQPGGLHPLVIPSVIASTPILPQAAGPTSTPLLPQVPSIPPLVQPVANVPAVQQTLIHSQPQPALLPNQPHTHCPEVDSDTQPKAPGIDDIKTLEEKLRSLFSEHSSSGAQHASVSLETSLVIESTVTPGIPTTAVAPSKLLTSTTSTCLPPTNLPLGTVALPVTPVVTPGQVSTPVSTTTSGVKPGTAPSKPPLTKAPVLPVGTELPAGTLPSEQLPPFPGPSLTQSQQPLEDLDAQLRRTLSPEMITVTSAVGPVSMAAPTAITEAGTQPQKGVSQVKEGPVLATSSGAGVFKMGRFQVSVAADGAQKEGKNKSEDAKSVHFESSTSESSVLSSSSPESTLVKPEPNGITIPGISSDVPESAHKTTASEAKSDTGQPTKVGRFQVTTTANKVGRFSVSKTEDKITDTKKEGPVASPPFMDLEQAVLPAVIPKKEKPELSEPSHLNGPSSDPEAAFLSRDVDDGSGSPHSPHQLSSKSLPSQNLSQSLSNSFNSSYMSSDNESDIEDEDLKLELRRLRDKHLKEIQDLQSRQKHEIESLYTKLGKVPPAVIIPPAAPLSGRRRRPTKSKGSKSSRSSSLGNKSPQLSGNLSGQSAASVLHPQQTLHPPGNIPESGQNQLLQPLKPSPSSDNLYSAFTSDGAISVPSLSAPGQGTSSTNTVGATVNSQAAQAQPPAMTSSRKGTFTDDLHKLVDNWARDAMNLSGRRGSKGHMNYEGPGMARKFSAPGQLCISMTSNLGGSAPISAASATSLGHFTKSMCPPQQYGFPATPFGAQWSGTGGPAPQPLGQFQPVGTASLQNFNISNLQKSISNPPGSNLRTT.

Disordered stretches follow at residues 1–81 (MSGG…RFFR) and 95–203 (LPGL…QQDD). Ser-15 and Ser-19 each carry phosphoserine. The span at 50-66 (RTEEYRRRRHTMDKDSR) shows a compositional bias: basic and acidic residues. Phosphothreonine is present on Thr-60. Low complexity-rich tracts occupy residues 95-108 (LPGLPLSLPQPSIP) and 125-153 (VTATATSQVAQQPPAAAAPGEQAVAGPAP). Phosphoserine is present on residues Ser-167 and Ser-174. In terms of domain architecture, Protein kinase spans 221-479 (LKFDIEIGRG…IKDLLNHAFF (259 aa)). Ser-231 lines the ATP pocket. The chloride site is built by Phe-283 and Leu-299. ATP-binding positions include 301–304 (TELM) and Lys-351. The Proton acceptor role is filled by Asp-368. Chloride contacts are provided by Leu-369 and Leu-371. A phosphoserine; by autocatalysis mark is found at Ser-378 and Ser-382. Positions 488–555 (ELAEEDDGEK…VCEGDHKTMA (68 aa)) are autoinhibitory domain. A compositionally biased stretch (basic and acidic residues) spans 573–588 (QLVREEQEKKKQEESS). 3 disordered regions span residues 573–779 (QLVR…QPQA), 1018–1041 (QPGGSLAQAPTTSSQQAVLESTQG), and 1053–1119 (VAQT…SRPK). Positions 598-614 (ASQTGIKQLPSASTGIP) are enriched in polar residues. A compositionally biased stretch (low complexity) spans 615 to 625 (TASTTSASVST). Residues 628–638 (EPEEPEADQHQ) form an interaction with KLHL3 region. Residues 637-689 (HQQLQYQQPSISVLSDGTVDSGQGSSVFTESRVSSQQTVSYGSQHEQAHSTGT) are compositionally biased toward polar residues. The segment covering 709–779 (PPSSVAQGQS…TAQPVSQPQA (71 aa)) has biased composition (low complexity). Positions 1025-1041 (QAPTTSSQQAVLESTQG) are enriched in polar residues. The segment covering 1053-1077 (VAQTQATQPTTLASSVDSAHSDVAS) has biased composition (low complexity). A compositionally biased stretch (polar residues) spans 1080–1090 (SDGNENVPSSS). Residues 1098-1119 (TKRHYRKSVRSRSRHEKTSRPK) are compositionally biased toward basic residues. Residues 1257 to 1260 (RFIV) carry the RFXV motif 1 motif. Ser-1261 carries the post-translational modification Phosphoserine. Composition is skewed to low complexity over residues 1457–1467 (SASAGGSTATP) and 1733–1745 (QVSTPVSTTTSGV). Disordered regions lie at residues 1457–1476 (SASAGGSTATPGPKPPAVVS) and 1733–1790 (QVST…TQSQ). Thr-1848 is subject to Phosphothreonine. Residues 1859 to 1862 (RFQV) carry the RFXV motif 2 motif. The disordered stretch occupies residues 1866–1948 (ADGAQKEGKN…QPTKVGRFQV (83 aa)). Residues 1869 to 1884 (AQKEGKNKSEDAKSVH) show a composition bias toward basic and acidic residues. The span at 1887–1905 (SSTSESSVLSSSSPESTLV) shows a compositional bias: low complexity. Residues 1927–1940 (KTTASEAKSDTGQP) are compositionally biased toward polar residues. 2 short sequence motifs (RFXV motif) span residues 1945–1948 (RFQV) and 1957–1960 (RFSV). Phosphoserine is present on residues Ser-1978, Ser-2002, Ser-2011, Ser-2012, Ser-2027, Ser-2029, and Ser-2032. The span at 1994–2003 (PKKEKPELSE) shows a compositional bias: basic and acidic residues. Disordered stretches follow at residues 1994 to 2069 (PKKE…DIED) and 2101 to 2196 (LYTK…NLYS). Residues 2035–2062 (QLSSKSLPSQNLSQSLSNSFNSSYMSSD) show a composition bias toward low complexity. Ser-2121 is modified (phosphoserine). Positions 2122-2134 (GRRRRPTKSKGSK) are enriched in basic residues. Low complexity predominate over residues 2135 to 2145 (SSRSSSLGNKS). Composition is skewed to polar residues over residues 2146–2167 (PQLSGNLSGQSAASVLHPQQTL) and 2175–2196 (ESGQNQLLQPLKPSPSSDNLYS). The interval 2241-2261 (SRKGTFTDDLHKLVDNWARDA) is amphipathic alpha-helix. Phosphoserine is present on residues Ser-2270 and Ser-2286. Residues 2332–2352 (PFGAQWSGTGGPAPQPLGQFQ) are disordered. A phosphoserine mark is found at Ser-2370 and Ser-2372.

This sequence belongs to the protein kinase superfamily. Ser/Thr protein kinase family. WNK subfamily. As to quaternary structure, interacts with WNK3. Interacts with WNK4; inhibiting the activity of WNK4. Interacts with SGK1; promoting its activation. Associates with the mTORC2 complex. Interacts with UVRAG. Interacts (via amphipathic alpha-helix region) with EMC2; promoting the ER membrane protein complex assembly. In terms of assembly, interacts with isoform 1; inhibiting isoform 1 activity. Mg(2+) serves as cofactor. In terms of processing, autophosphorylated at Ser-378 and Ser-382, promoting its activity. Autophosphorylation at Ser-382 is inhibited by intracellular calcium. Phosphorylation at Thr-60 increases ability to activate SGK1. Ubiquitinated by the BCR(KLHL3) complex, leading to its degradation. Also ubiquitinated by the BCR(KLHL2) complex. Post-translationally, may be O-glycosylated. As to expression, widely expressed, with highest levels observed in the testis, heart, kidney and skeletal muscle. In terms of tissue distribution, strong expression in dorsal root ganglia and spinal cord. This isoform is kidney-specific and specifically expressed in the distal convoluted tubule (DCT) and connecting tubule (CNT) of the nephron.

Its subcellular location is the cytoplasm. It localises to the nucleus. It is found in the cytoskeleton. The protein localises to the spindle. The catalysed reaction is L-seryl-[protein] + ATP = O-phospho-L-seryl-[protein] + ADP + H(+). The enzyme catalyses L-threonyl-[protein] + ATP = O-phospho-L-threonyl-[protein] + ADP + H(+). Activated in response to hyperosmotic stress: cell shrinkage promotes formation of a membraneless compartment that concentrates WNK1 with its substrates, OXSR1/OSR1 and STK39/SPAK. Activation requires autophosphorylation of Ser-382 and, to a lower extent, Ser-378. Autophosphorylation and subsequent activation is inhibited by increases in intracellular ionic strength: Cl(-) potently inhibits WNK1 kinase activity via direct binding. Also inhibited by K(+) ions. Inhibited by small compounds staurosporine, tyrphostin 47, as well as Src tyrosine kinase inhibitors PP1 and PP2. In terms of biological role, serine/threonine-protein kinase component of the WNK1-SPAK/OSR1 kinase cascade, which acts as a key regulator of blood pressure and regulatory volume increase by promoting ion influx. WNK1 mediates regulatory volume increase in response to hyperosmotic stress by acting as a molecular crowding sensor, which senses cell shrinkage and mediates formation of a membraneless compartment by undergoing liquid-liquid phase separation. The membraneless compartment concentrates WNK1 with its substrates, OXSR1/OSR1 and STK39/SPAK, promoting WNK1-dependent phosphorylation and activation of downstream kinases OXSR1/OSR1 and STK39/SPAK. Following activation, OXSR1/OSR1 and STK39/SPAK catalyze phosphorylation of ion cotransporters SLC12A1/NKCC2, SLC12A2/NKCC1, SLC12A5/KCC2 and SLC12A6/KCC3, regulating their activity. Phosphorylation of Na-K-Cl cotransporters SLC12A2/NKCC1 and SLC12A2/NKCC1 promote their activation and ion influx; simultaneously, phosphorylation of K-Cl cotransporters SLC12A5/KCC2 and SLC12A6/KCC3 inhibit their activity, blocking ion efflux. Also acts as a regulator of angiogenesis in endothelial cells via activation of OXSR1/OSR1 and STK39/SPAK: activation of OXSR1/OSR1 regulates chemotaxis and invasion, while STK39/SPAK regulates endothelial cell proliferation. Also acts independently of the WNK1-SPAK/OSR1 kinase cascade by catalyzing phosphorylation of other substrates, such as SYT2, PCF11 and NEDD4L. Mediates phosphorylation of SYT2, regulating SYT2 association with phospholipids and membrane-binding. Regulates mRNA export in the nucleus by mediating phosphorylation of PCF11, thereby decreasing the association between PCF11 and POLR2A/RNA polymerase II and promoting mRNA export to the cytoplasm. Acts as a negative regulator of autophagy. Required for the abscission step during mitosis, independently of the WNK1-SPAK/OSR1 kinase cascade. May also play a role in actin cytoskeletal reorganization. Also acts as a scaffold protein independently of its protein kinase activity: negatively regulates cell membrane localization of various transporters and channels, such as SLC4A4, SLC26A6, SLC26A9, TRPV4 and CFTR. Involved in the regulation of epithelial Na(+) channel (ENaC) by promoting activation of SGK1 in a kinase-independent manner: probably acts as a scaffold protein that promotes the recruitment of SGK1 to the mTORC2 complex in response to chloride, leading to mTORC2-dependent phosphorylation and activation of SGK1. Acts as an assembly factor for the ER membrane protein complex independently of its protein kinase activity: associates with EMC2 in the cytoplasm via its amphipathic alpha-helix, and prevents EMC2 ubiquitination and subsequent degradation, thereby promoting EMC2 stabilization. Its function is as follows. Kinase-defective isoform specifically expressed in kidney, which acts as a dominant-negative regulator of the longer isoform 1. Does not directly inhibit WNK4 and has no direct effect on sodium and chloride ion transport. Down-regulates sodium-chloride cotransporter activity indirectly by inhibiting isoform 1, it associates with isoform 1 and attenuates its kinase activity. In kidney, may play an important role regulating sodium and potassium balance. This is Serine/threonine-protein kinase WNK1 from Homo sapiens (Human).